A 193-amino-acid polypeptide reads, in one-letter code: Cysteine and glycine-rich protein 1 (193 aa).

In terms of domain architecture, LIM zinc-binding 1 spans 10–61 (CGVCQKTVYFAEEVQCEGNSFHKSCFLCMVCKKNLDSTTVAVHGEEIYCKSC). A Nuclear localization signal motif is present at residues 64 to 69 (KKYGPK). Ser81 is subject to Phosphoserine. At Lys84 the chain carries N6-acetyllysine. Residue Lys91 forms a Glycyl lysine isopeptide (Lys-Gly) (interchain with G-Cter in SUMO2) linkage. Lys112, Lys131, Lys137, and Lys161 each carry N6-acetyllysine. The 52-residue stretch at 119–170 (CPRCSQAVYAAEKVIGAGKSWHKACFRCAKCGKGLESTTLADKDGEIYCKGC) folds into the LIM zinc-binding 2 domain. Position 192 is a phosphoserine (Ser192).

As to quaternary structure, interacts with ASCC1; ASCC2 and TRIP4.

The protein localises to the nucleus. In terms of biological role, could play a role in neuronal development. This is Cysteine and glycine-rich protein 1 (CSRP1) from Pongo abelii (Sumatran orangutan).